The sequence spans 431 residues: uncharacterized protein (431 aa).

This is an uncharacterized protein from Acanthamoeba polyphaga mimivirus (APMV).